Consider the following 538-residue polypeptide: Beta-1,4-mannosyl-glycoprotein 4-beta-N-acetylglucosaminyltransferase (538 aa).

Residues 1–7 (MKMRRYK) are Cytoplasmic-facing. A helical; Signal-anchor for type II membrane protein transmembrane segment spans residues 8–23 (LFLMFCMAGLCLISFL). Residues 24–538 (HFFKTLSYVT…VRGKLDTTEG (515 aa)) are Lumenal-facing. The interval 121–151 (GTRMLEKPSPGRTEEKTKVAEGSSVRGPARR) is disordered. N-linked (GlcNAc...) asparagine glycans are attached at residues Asn245, Asn263, and Asn401. Residues 509 to 538 (PKSTVEGGRRNQGSDGRSSAVRGKLDTTEG) are disordered.

Belongs to the glycosyltransferase 17 family. Interacts with MGAT4D.

It is found in the golgi apparatus membrane. It catalyses the reaction N(4)-{beta-D-GlcNAc-(1-&gt;2)-alpha-D-Man-(1-&gt;3)-[beta-D-GlcNAc-(1-&gt;2)-alpha-D-Man-(1-&gt;6)]-beta-D-Man-(1-&gt;4)-beta-D-GlcNAc-(1-&gt;4)-beta-D-GlcNAc}-L-asparaginyl-[protein] + UDP-N-acetyl-alpha-D-glucosamine = N(4)-{beta-D-GlcNAc-(1-&gt;2)-alpha-D-Man-(1-&gt;3)-[beta-D-GlcNAc-(1-&gt;4)]-[beta-D-GlcNAc-(1-&gt;2)-alpha-D-Man-(1-&gt;6)]-beta-D-Man-(1-&gt;4)-beta-D-GlcNAc-(1-&gt;4)-beta-D-GlcNAc}-L-asparaginyl-[protein] + UDP + H(+). It participates in protein modification; protein glycosylation. Functionally, it is involved in the regulation of the biosynthesis and biological function of glycoprotein oligosaccharides. Catalyzes the addition of N-acetylglucosamine in beta 1-4 linkage to the beta-linked mannose of the trimannosyl core of N-linked sugar chains, called bisecting N-acetylglucosamine (GlcNAc). It is one of the most important enzymes involved in the regulation of the biosynthesis of glycoprotein oligosaccharides. The addition of this bisecting GlcNAc residue alters not only the composition, but also the conformation of the N-glycan. The introduction of the bisecting GlcNAc residue results in the suppression of further processing and elongation of N-glycans, precluding the formation of beta-1,6 GlcNAc branching, catalyzed by MGAT5 since it is unable to use the bisected oligosaccharide as a substrate. Addition of bisecting N-acetylglucosamine to CDH1/E-cadherin modulates CDH1 cell membrane location. Inhibits NeuAc-alpha-2,3-Gal-beta-1,4-GlcNAc- formation which modulates sialylation levels and plays a role in cell migration regulation. In brain, addition of bisecting N-acetylglucosamine to BACE1 blocks its lysosomal targeting in response to oxidative stress and further degradation which increases its location to early endosome and the APP cleavage. This is Beta-1,4-mannosyl-glycoprotein 4-beta-N-acetylglucosaminyltransferase (Mgat3) from Rattus norvegicus (Rat).